A 393-amino-acid polypeptide reads, in one-letter code: Succinate--CoA ligase [ADP-forming] subunit beta (393 aa).

The region spanning 9 to 245 (KMLFAQYGIP…PSQEDKCETY (237 aa)) is the ATP-grasp domain. Residues Lys46, 53–55 (GRG), Glu99, Ile102, and Glu107 each bind ATP. Positions 200 and 214 each coordinate Mg(2+). Residues Asn265 and 322 to 324 (GIV) contribute to the substrate site.

Belongs to the succinate/malate CoA ligase beta subunit family. In terms of assembly, heterotetramer of two alpha and two beta subunits. Requires Mg(2+) as cofactor.

The catalysed reaction is succinate + ATP + CoA = succinyl-CoA + ADP + phosphate. It catalyses the reaction GTP + succinate + CoA = succinyl-CoA + GDP + phosphate. It participates in carbohydrate metabolism; tricarboxylic acid cycle; succinate from succinyl-CoA (ligase route): step 1/1. Its function is as follows. Succinyl-CoA synthetase functions in the citric acid cycle (TCA), coupling the hydrolysis of succinyl-CoA to the synthesis of either ATP or GTP and thus represents the only step of substrate-level phosphorylation in the TCA. The beta subunit provides nucleotide specificity of the enzyme and binds the substrate succinate, while the binding sites for coenzyme A and phosphate are found in the alpha subunit. The protein is Succinate--CoA ligase [ADP-forming] subunit beta of Baumannia cicadellinicola subsp. Homalodisca coagulata.